Here is a 402-residue protein sequence, read N- to C-terminus: Secreted RxLR effector protein 73 (402 aa).

The N-terminal stretch at 1 to 23 (MRLLHVVVATVSLTGAITSLIAA) is a signal peptide. Residue Asn-27 is glycosylated (N-linked (GlcNAc...) asparagine). Positions 104-107 (RVLR) match the RxLR motif. Asn-111, Asn-134, Asn-143, Asn-165, and Asn-286 each carry an N-linked (GlcNAc...) asparagine glycan.

It belongs to the RxLR effector family.

The protein localises to the secreted. The protein resides in the host cell. Its function is as follows. Secreted effector that completely suppresses the host cell death induced by cell death-inducing proteins. In Plasmopara viticola (Downy mildew of grapevine), this protein is Secreted RxLR effector protein 73.